The sequence spans 219 residues: MTQQEMKKIAAQAALQFVKPDTIVGVGSGSTVNCFIDALASMKDQIKGAVAASKASEERLRAIGIEVFNANEVSELDVYIDGADEITPQGAMIKGGGAALTREKIVSSLAKKFVCIVDGSKQVDVLGTTFPLPVEVIPMARSYVARQLVALGGSPEYREGVVTDNGNVILDVHNFHIIEPLKMEHTINNIAGVVTNGIFAQRYANVTIVGTPEGAKIIE.

Residues 28–31 (SGST), 81–84 (DGAD), and 94–97 (KGGG) each bind substrate. E103 functions as the Proton acceptor in the catalytic mechanism. K121 serves as a coordination point for substrate.

It belongs to the ribose 5-phosphate isomerase family. Homodimer.

The catalysed reaction is aldehydo-D-ribose 5-phosphate = D-ribulose 5-phosphate. It functions in the pathway carbohydrate degradation; pentose phosphate pathway; D-ribose 5-phosphate from D-ribulose 5-phosphate (non-oxidative stage): step 1/1. In terms of biological role, catalyzes the reversible conversion of ribose-5-phosphate to ribulose 5-phosphate. The polypeptide is Ribose-5-phosphate isomerase A (Actinobacillus pleuropneumoniae serotype 5b (strain L20)).